Consider the following 227-residue polypeptide: ATP-dependent dethiobiotin synthetase BioD (227 aa).

13-18 contacts ATP; sequence DIGKTY. Residue Thr17 participates in Mg(2+) binding. Residue Lys38 is part of the active site. Ser42 serves as a coordination point for substrate. Residues Asp55, 116 to 119, and 179 to 180 each bind ATP; these read EGSG and NN. Mg(2+) is bound by residues Asp55 and Glu116.

It belongs to the dethiobiotin synthetase family. Homodimer. Mg(2+) serves as cofactor.

Its subcellular location is the cytoplasm. It catalyses the reaction (7R,8S)-7,8-diammoniononanoate + CO2 + ATP = (4R,5S)-dethiobiotin + ADP + phosphate + 3 H(+). Its pathway is cofactor biosynthesis; biotin biosynthesis; biotin from 7,8-diaminononanoate: step 1/2. Functionally, catalyzes a mechanistically unusual reaction, the ATP-dependent insertion of CO2 between the N7 and N8 nitrogen atoms of 7,8-diaminopelargonic acid (DAPA, also called 7,8-diammoniononanoate) to form a ureido ring. This chain is ATP-dependent dethiobiotin synthetase BioD, found in Clostridium botulinum (strain 657 / Type Ba4).